A 906-amino-acid polypeptide reads, in one-letter code: Gamma-tubulin complex component 3 homolog (906 aa).

Polar residues predominate over residues 208-229; the sequence is GQQPSQQSTTTKGLPNTVSRNV. Positions 208 to 242 are disordered; that stretch reads GQQPSQQSTTTKGLPNTVSRNVPRTRREGDSSGSV.

Belongs to the TUBGCP family. Interacts with gamma-tubulin.

It localises to the cytoplasm. The protein resides in the cytoskeleton. It is found in the microtubule organizing center. The protein localises to the centrosome. Necessary for the recruitment of gamma-tubulin to the centrosome and for the formation of a functional centrosome. The protein is Gamma-tubulin complex component 3 homolog (tubgcp3) of Xenopus laevis (African clawed frog).